A 163-amino-acid polypeptide reads, in one-letter code: uncharacterized protein (163 aa).

Residues 142–163 (PQIVISEHNNTKETSPSRQFEH) form a disordered region. Residues 153–163 (KETSPSRQFEH) show a composition bias toward polar residues.

It belongs to the RCAN family.

In terms of biological role, inhibits calcineurin-dependent transcriptional responses by binding to the catalytic domain of calcineurin. This is an uncharacterized protein from Schizosaccharomyces pombe (strain 972 / ATCC 24843) (Fission yeast).